The sequence spans 335 residues: N-acetyl-gamma-glutamyl-phosphate reductase (335 aa).

Residue Cys156 is part of the active site.

The protein belongs to the NAGSA dehydrogenase family. Type 1 subfamily.

The protein resides in the cytoplasm. The catalysed reaction is N-acetyl-L-glutamate 5-semialdehyde + phosphate + NADP(+) = N-acetyl-L-glutamyl 5-phosphate + NADPH + H(+). Its pathway is amino-acid biosynthesis; L-arginine biosynthesis; N(2)-acetyl-L-ornithine from L-glutamate: step 3/4. In terms of biological role, catalyzes the NADPH-dependent reduction of N-acetyl-5-glutamyl phosphate to yield N-acetyl-L-glutamate 5-semialdehyde. The chain is N-acetyl-gamma-glutamyl-phosphate reductase from Aeromonas salmonicida (strain A449).